Consider the following 473-residue polypeptide: UDP-glycosyltransferase 71A27 (473 aa).

Residue His-15 is the Proton acceptor of the active site. An anthocyanidin is bound at residue His-15. Catalysis depends on Asp-117, which acts as the Charge relay. Residues Ala-345, Gln-347, His-362, Trp-365, Asn-366, Ser-367, and Glu-370 each contribute to the UDP-alpha-D-glucose site. Gly-385 contributes to the an anthocyanidin binding site. 2 residues coordinate UDP-alpha-D-glucose: Glu-386 and Gln-387.

It belongs to the UDP-glycosyltransferase family.

The enzyme catalyses (20S)-protopanaxadiol + UDP-alpha-D-glucose = (20S)-ginsenoside C-K + UDP + H(+). The protein operates within secondary metabolite biosynthesis; terpenoid biosynthesis. Its function is as follows. Component of the triterpene saponins (e.g. PPD-type ginsenosides or panaxosides) biosynthetic pathways. Glycosyltransferase that catalyzes the biosynthesis of compound K from protopanaxadiol (PPD). The chain is UDP-glycosyltransferase 71A27 from Panax ginseng (Korean ginseng).